Here is a 66-residue protein sequence, read N- to C-terminus: DNA gyrase inhibitor YacG (66 aa).

Residues C10, C13, C29, and C33 each coordinate Zn(2+).

The protein belongs to the DNA gyrase inhibitor YacG family. In terms of assembly, interacts with GyrB. Zn(2+) is required as a cofactor.

Inhibits all the catalytic activities of DNA gyrase by preventing its interaction with DNA. Acts by binding directly to the C-terminal domain of GyrB, which probably disrupts DNA binding by the gyrase. The protein is DNA gyrase inhibitor YacG of Edwardsiella ictaluri (strain 93-146).